The chain runs to 289 residues: tRNA (adenine(58)-N(1))-methyltransferase catalytic subunit TRMT61A (289 aa).

Serine 2 carries the post-translational modification N-acetylserine. Substrate-binding positions include 20 to 22, 35 to 42, 64 to 65, 85 to 89, and 110 to 117; these read LGH, QTQTRHGV, GW, QILYS, and SGTGSGSV. S-adenosyl-L-methionine-binding positions include leucine 87, 114–116, glutamate 135, arginine 140, 163–164, and aspartate 181; these read SGS and DV. Residues 180–183 and 205–212 each bind substrate; these read LDIP and SFSPCIEQ. Residues 245-272 are disordered; that stretch reads LPPPDLGTGTDGPAGSDTSPFRSGTPMK. Over residues 250–259 the composition is skewed to low complexity; it reads LGTGTDGPAG. A Phosphoserine modification is found at serine 263. Threonine 278 contacts substrate.

This sequence belongs to the class I-like SAM-binding methyltransferase superfamily. TRM61 family. Heterotetramer; composed of two copies of TRMT6 and two copies of TRMT61A.

Its subcellular location is the nucleus. The enzyme catalyses adenosine(58) in tRNA + S-adenosyl-L-methionine = N(1)-methyladenosine(58) in tRNA + S-adenosyl-L-homocysteine + H(+). It carries out the reaction an adenosine in mRNA + S-adenosyl-L-methionine = an N(1)-methyladenosine in mRNA + S-adenosyl-L-homocysteine + H(+). Its function is as follows. Catalytic subunit of tRNA (adenine-N(1)-)-methyltransferase, which catalyzes the formation of N(1)-methyladenine at position 58 (m1A58) in initiator methionyl-tRNA. Catalytic subunit of mRNA N(1)-methyltransferase complex, which mediates methylation of adenosine residues at the N(1) position of a small subset of mRNAs: N(1) methylation takes place in tRNA T-loop-like structures of mRNAs and is only present at low stoichiometries. The sequence is that of tRNA (adenine(58)-N(1))-methyltransferase catalytic subunit TRMT61A (TRMT61A) from Homo sapiens (Human).